A 362-amino-acid polypeptide reads, in one-letter code: L-arginine:L-lysine amidinotransferase (362 aa).

Residues aspartate 195 and histidine 244 contribute to the active site. Catalysis depends on cysteine 346, which acts as the Amidino-cysteine intermediate.

The protein belongs to the amidinotransferase family.

The enzyme catalyses L-lysine + L-arginine = L-homoarginine + L-ornithine. It catalyses the reaction L-canavanine + L-ornithine = L-canaline + L-arginine + H(+). In terms of biological role, involved in the biosynthesis of phaseolotoxin, a nonhost-specific toxin which is a key component in the development of the halo blight disease of beans. Catalyzes the transfer of an amidino group from arginine to lysine to produce one molecule of homoarginine and one molecule of ornithine, both being precursors in the biosynthesis of phaseolotoxin. Can also use L-canavanine as an alternative amidine donor with L-ornithine as amidine acceptor. The chain is L-arginine:L-lysine amidinotransferase from Pseudomonas savastanoi pv. phaseolicola (Pseudomonas syringae pv. phaseolicola).